Here is a 331-residue protein sequence, read N- to C-terminus: GTP 3',8-cyclase (331 aa).

A Radical SAM core domain is found at 6-231; sequence PFGRTISYLR…TDIPFKTGGP (226 aa). R15 is a GTP binding site. 2 residues coordinate [4Fe-4S] cluster: C22 and C26. Y28 contributes to the S-adenosyl-L-methionine binding site. Residue C29 participates in [4Fe-4S] cluster binding. GTP is bound at residue R64. S-adenosyl-L-methionine is bound at residue G68. T98 contributes to the GTP binding site. S122 is an S-adenosyl-L-methionine binding site. Residue K158 participates in GTP binding. M192 provides a ligand contact to S-adenosyl-L-methionine. [4Fe-4S] cluster-binding residues include C255 and C258. Residue 260-262 participates in GTP binding; it reads RVR. C272 is a [4Fe-4S] cluster binding site.

The protein belongs to the radical SAM superfamily. MoaA family. In terms of assembly, monomer and homodimer. Requires [4Fe-4S] cluster as cofactor.

The catalysed reaction is GTP + AH2 + S-adenosyl-L-methionine = (8S)-3',8-cyclo-7,8-dihydroguanosine 5'-triphosphate + 5'-deoxyadenosine + L-methionine + A + H(+). It participates in cofactor biosynthesis; molybdopterin biosynthesis. In terms of biological role, catalyzes the cyclization of GTP to (8S)-3',8-cyclo-7,8-dihydroguanosine 5'-triphosphate. In Mesorhizobium japonicum (strain LMG 29417 / CECT 9101 / MAFF 303099) (Mesorhizobium loti (strain MAFF 303099)), this protein is GTP 3',8-cyclase.